Consider the following 84-residue polypeptide: Cell division topological specificity factor (84 aa).

Belongs to the MinE family.

Its function is as follows. Prevents the cell division inhibition by proteins MinC and MinD at internal division sites while permitting inhibition at polar sites. This ensures cell division at the proper site by restricting the formation of a division septum at the midpoint of the long axis of the cell. The chain is Cell division topological specificity factor from Ralstonia pickettii (strain 12J).